Here is a 502-residue protein sequence, read N- to C-terminus: D-erythritol 1-phosphate dehydrogenase (502 aa).

Residue D8 to E36 coordinates FAD.

Belongs to the FAD-dependent glycerol-3-phosphate dehydrogenase family. It depends on FAD as a cofactor.

The enzyme catalyses D-erythritol 1-phosphate + NADP(+) = D-erythrulose 1-phosphate + NADPH + H(+). It participates in carbohydrate metabolism; erythritol degradation. In terms of biological role, catalyzes the oxydation of D-erythritol 1-phosphate to D-erythrulose 1-phosphate. In Brucella abortus (strain 2308), this protein is D-erythritol 1-phosphate dehydrogenase.